A 491-amino-acid polypeptide reads, in one-letter code: Ketol-acid reductoisomerase (NADP(+)) (491 aa).

One can recognise a KARI N-terminal Rossmann domain in the interval 15 to 208 (AQLGKCRFMG…GGHRAGVLES (194 aa)). NADP(+)-binding positions include 45-48 (CGAQ), Arg68, Arg76, Ser78, and 108-110 (DKQ). The active site involves His132. Gly158 provides a ligand contact to NADP(+). KARI C-terminal knotted domains lie at 209 to 344 (SFVA…TAPQ) and 345 to 484 (YEGK…MTDM). Mg(2+) is bound by residues Asp217, Glu221, Glu389, and Glu393. A substrate-binding site is contributed by Ser414.

The protein belongs to the ketol-acid reductoisomerase family. Requires Mg(2+) as cofactor.

The catalysed reaction is (2R)-2,3-dihydroxy-3-methylbutanoate + NADP(+) = (2S)-2-acetolactate + NADPH + H(+). It catalyses the reaction (2R,3R)-2,3-dihydroxy-3-methylpentanoate + NADP(+) = (S)-2-ethyl-2-hydroxy-3-oxobutanoate + NADPH + H(+). Its pathway is amino-acid biosynthesis; L-isoleucine biosynthesis; L-isoleucine from 2-oxobutanoate: step 2/4. The protein operates within amino-acid biosynthesis; L-valine biosynthesis; L-valine from pyruvate: step 2/4. Functionally, involved in the biosynthesis of branched-chain amino acids (BCAA). Catalyzes an alkyl-migration followed by a ketol-acid reduction of (S)-2-acetolactate (S2AL) to yield (R)-2,3-dihydroxy-isovalerate. In the isomerase reaction, S2AL is rearranged via a Mg-dependent methyl migration to produce 3-hydroxy-3-methyl-2-ketobutyrate (HMKB). In the reductase reaction, this 2-ketoacid undergoes a metal-dependent reduction by NADPH to yield (R)-2,3-dihydroxy-isovalerate. In Escherichia coli (strain 55989 / EAEC), this protein is Ketol-acid reductoisomerase (NADP(+)).